A 157-amino-acid polypeptide reads, in one-letter code: Crossover junction endodeoxyribonuclease RuvC (157 aa).

Active-site residues include Asp7, Glu67, and Asp140. Mg(2+)-binding residues include Asp7, Glu67, and Asp140.

Belongs to the RuvC family. In terms of assembly, homodimer which binds Holliday junction (HJ) DNA. The HJ becomes 2-fold symmetrical on binding to RuvC with unstacked arms; it has a different conformation from HJ DNA in complex with RuvA. In the full resolvosome a probable DNA-RuvA(4)-RuvB(12)-RuvC(2) complex forms which resolves the HJ. The cofactor is Mg(2+).

The protein localises to the cytoplasm. The catalysed reaction is Endonucleolytic cleavage at a junction such as a reciprocal single-stranded crossover between two homologous DNA duplexes (Holliday junction).. Its function is as follows. The RuvA-RuvB-RuvC complex processes Holliday junction (HJ) DNA during genetic recombination and DNA repair. Endonuclease that resolves HJ intermediates. Cleaves cruciform DNA by making single-stranded nicks across the HJ at symmetrical positions within the homologous arms, yielding a 5'-phosphate and a 3'-hydroxyl group; requires a central core of homology in the junction. The consensus cleavage sequence is 5'-(A/T)TT(C/G)-3'. Cleavage occurs on the 3'-side of the TT dinucleotide at the point of strand exchange. HJ branch migration catalyzed by RuvA-RuvB allows RuvC to scan DNA until it finds its consensus sequence, where it cleaves and resolves the cruciform DNA. The polypeptide is Crossover junction endodeoxyribonuclease RuvC (Thermosipho melanesiensis (strain DSM 12029 / CIP 104789 / BI429)).